We begin with the raw amino-acid sequence, 527 residues long: Peptide chain release factor 3 (527 aa).

The tr-type G domain maps to A11–L278. GTP is bound by residues S20–T27, D87–H91, and N141–D144.

Belongs to the TRAFAC class translation factor GTPase superfamily. Classic translation factor GTPase family. PrfC subfamily.

The protein localises to the cytoplasm. Functionally, increases the formation of ribosomal termination complexes and stimulates activities of RF-1 and RF-2. It binds guanine nucleotides and has strong preference for UGA stop codons. It may interact directly with the ribosome. The stimulation of RF-1 and RF-2 is significantly reduced by GTP and GDP, but not by GMP. The chain is Peptide chain release factor 3 from Saccharophagus degradans (strain 2-40 / ATCC 43961 / DSM 17024).